The chain runs to 93 residues: Large ribosomal subunit protein eL42 (93 aa).

The Zn(2+) site is built by Cys11, Cys14, Cys72, and Cys75. The C4-type zinc finger occupies 11–75 (CPHCHSHFEH…TDLKYRCSEC (65 aa)).

This sequence belongs to the eukaryotic ribosomal protein eL42 family. Part of the 50S ribosomal subunit. Zn(2+) is required as a cofactor.

Binds to the 23S rRNA. This is Large ribosomal subunit protein eL42 (rpl44e) from Natronomonas pharaonis (strain ATCC 35678 / DSM 2160 / CIP 103997 / JCM 8858 / NBRC 14720 / NCIMB 2260 / Gabara) (Halobacterium pharaonis).